Reading from the N-terminus, the 155-residue chain is MLCPNCHQNASRVIDSRPTDEGRTIRRRRECENCGYRFTTFERVEQSPLLVIKNDGTREAFSREKILNGVAAACQKRPVTSEQLNKLVDNVENRIRAKGVSEIYSKEIGELVMDQLADIDDVAYIRFASIYRQFTDMSSFMKTMEDMMDRHSKAK.

The segment at Cys-3–Cys-34 is a zinc-finger region. The 91-residue stretch at Leu-49 to Ser-139 folds into the ATP-cone domain.

It belongs to the NrdR family. Zn(2+) serves as cofactor.

Negatively regulates transcription of bacterial ribonucleotide reductase nrd genes and operons by binding to NrdR-boxes. This is Transcriptional repressor NrdR from Lactobacillus delbrueckii subsp. bulgaricus (strain ATCC 11842 / DSM 20081 / BCRC 10696 / JCM 1002 / NBRC 13953 / NCIMB 11778 / NCTC 12712 / WDCM 00102 / Lb 14).